A 131-amino-acid chain; its full sequence is Profilin LP04 (131 aa).

The protein belongs to the profilin family. Occurs in many kinds of cells as a complex with monomeric actin in a 1:1 ratio.

It is found in the cytoplasm. It localises to the cytoskeleton. Functionally, binds to actin and affects the structure of the cytoskeleton. At high concentrations, profilin prevents the polymerization of actin, whereas it enhances it at low concentrations. By binding to PIP2, it inhibits the formation of IP3 and DG. The protein is Profilin LP04 of Oryza sativa subsp. indica (Rice).